Reading from the N-terminus, the 252-residue chain is Large ribosomal subunit protein uL4 (252 aa).

It belongs to the universal ribosomal protein uL4 family. In terms of assembly, part of the 50S ribosomal subunit.

One of the primary rRNA binding proteins, this protein initially binds near the 5'-end of the 23S rRNA. It is important during the early stages of 50S assembly. It makes multiple contacts with different domains of the 23S rRNA in the assembled 50S subunit and ribosome. Functionally, forms part of the polypeptide exit tunnel. The protein is Large ribosomal subunit protein uL4 of Methanococcus aeolicus (strain ATCC BAA-1280 / DSM 17508 / OCM 812 / Nankai-3).